The primary structure comprises 540 residues: Sterol 14-alpha demethylase (540 aa).

A helical transmembrane segment spans residues 41–61 (PLFLVSGFLGVCVAYAVANII). Cys485 contacts heme.

This sequence belongs to the cytochrome P450 family. The cofactor is heme.

The protein localises to the membrane. It catalyses the reaction a 14alpha-methyl steroid + 3 reduced [NADPH--hemoprotein reductase] + 3 O2 = a Delta(14) steroid + formate + 3 oxidized [NADPH--hemoprotein reductase] + 4 H2O + 4 H(+). The enzyme catalyses a 14alpha-methyl steroid + reduced [NADPH--hemoprotein reductase] + O2 = a 14alpha-hydroxymethyl steroid + oxidized [NADPH--hemoprotein reductase] + H2O + H(+). The catalysed reaction is a 14alpha-hydroxymethyl steroid + reduced [NADPH--hemoprotein reductase] + O2 = a 14alpha-formyl steroid + oxidized [NADPH--hemoprotein reductase] + 2 H2O + H(+). It carries out the reaction a 14alpha-formyl steroid + reduced [NADPH--hemoprotein reductase] + O2 = a Delta(14) steroid + formate + oxidized [NADPH--hemoprotein reductase] + H2O + 2 H(+). It catalyses the reaction lanosterol + 3 reduced [NADPH--hemoprotein reductase] + 3 O2 = 4,4-dimethyl-5alpha-cholesta-8,14,24-trien-3beta-ol + formate + 3 oxidized [NADPH--hemoprotein reductase] + 4 H2O + 4 H(+). The enzyme catalyses lanosterol + reduced [NADPH--hemoprotein reductase] + O2 = 32-hydroxylanosterol + oxidized [NADPH--hemoprotein reductase] + H2O + H(+). The catalysed reaction is 32-hydroxylanosterol + reduced [NADPH--hemoprotein reductase] + O2 = 32-oxolanosterol + oxidized [NADPH--hemoprotein reductase] + 2 H2O + H(+). It carries out the reaction 32-oxolanosterol + reduced [NADPH--hemoprotein reductase] + O2 = 4,4-dimethyl-5alpha-cholesta-8,14,24-trien-3beta-ol + formate + oxidized [NADPH--hemoprotein reductase] + H2O + 2 H(+). It catalyses the reaction eburicol + 3 reduced [NADPH--hemoprotein reductase] + 3 O2 = 14-demethyleburicol + formate + 3 oxidized [NADPH--hemoprotein reductase] + 4 H2O + 4 H(+). The enzyme catalyses eburicol + reduced [NADPH--hemoprotein reductase] + O2 = 32-hydroxyeburicol + oxidized [NADPH--hemoprotein reductase] + H2O + H(+). The catalysed reaction is 32-hydroxyeburicol + reduced [NADPH--hemoprotein reductase] + O2 = 32-oxoeburicol + oxidized [NADPH--hemoprotein reductase] + 2 H2O + H(+). It carries out the reaction 32-oxoeburicol + reduced [NADPH--hemoprotein reductase] + O2 = 14-demethyleburicol + formate + oxidized [NADPH--hemoprotein reductase] + H2O + 2 H(+). Its pathway is steroid biosynthesis; sterol biosynthesis. In terms of biological role, sterol 14-alpha demethylase; part of the gene cluster that mediates the biosynthesis of tetrahydropyranyl antifungal agent lanomycin that acts as an inhibitor of CYP51 and blocks the ergosterol biosynthesis. Sterol 14-alpha-demethylase plays a critical role in the biosynthesis of ergosterol, the major sterol component in fungal membranes that participates in a variety of functions. Acts as a self-resistant CYP51 that contains mutations found in CYP51s isolated from azole resistance strains and that is not inhibited by the final product of the cluster, lanomycin. This Pyrenophora dematioidea (Helminthosporium dematioideum) protein is Sterol 14-alpha demethylase.